Here is a 271-residue protein sequence, read N- to C-terminus: Formamidopyrimidine-DNA glycosylase (271 aa).

Catalysis depends on P2, which acts as the Schiff-base intermediate with DNA. E3 acts as the Proton donor in catalysis. K57 functions as the Proton donor; for beta-elimination activity in the catalytic mechanism. Residues H90, R109, and K151 each contribute to the DNA site. The FPG-type zinc-finger motif lies at 236 to 270 (HVYGRGGETCTQCGHLLSEIKLGQRATVFCSLCQK). Residue R260 is the Proton donor; for delta-elimination activity of the active site.

Belongs to the FPG family. Monomer. It depends on Zn(2+) as a cofactor.

The enzyme catalyses Hydrolysis of DNA containing ring-opened 7-methylguanine residues, releasing 2,6-diamino-4-hydroxy-5-(N-methyl)formamidopyrimidine.. The catalysed reaction is 2'-deoxyribonucleotide-(2'-deoxyribose 5'-phosphate)-2'-deoxyribonucleotide-DNA = a 3'-end 2'-deoxyribonucleotide-(2,3-dehydro-2,3-deoxyribose 5'-phosphate)-DNA + a 5'-end 5'-phospho-2'-deoxyribonucleoside-DNA + H(+). Involved in base excision repair of DNA damaged by oxidation or by mutagenic agents. Acts as a DNA glycosylase that recognizes and removes damaged bases. Has a preference for oxidized purines, such as 7,8-dihydro-8-oxoguanine (8-oxoG). Has AP (apurinic/apyrimidinic) lyase activity and introduces nicks in the DNA strand. Cleaves the DNA backbone by beta-delta elimination to generate a single-strand break at the site of the removed base with both 3'- and 5'-phosphates. This chain is Formamidopyrimidine-DNA glycosylase, found in Shewanella halifaxensis (strain HAW-EB4).